We begin with the raw amino-acid sequence, 354 residues long: Uroporphyrinogen decarboxylase (354 aa).

Residues 27–31 (RQAGR), Asp-77, Tyr-154, Ser-209, and His-327 each bind substrate.

The protein belongs to the uroporphyrinogen decarboxylase family. Homodimer.

The protein resides in the cytoplasm. The enzyme catalyses uroporphyrinogen III + 4 H(+) = coproporphyrinogen III + 4 CO2. It functions in the pathway porphyrin-containing compound metabolism; protoporphyrin-IX biosynthesis; coproporphyrinogen-III from 5-aminolevulinate: step 4/4. In terms of biological role, catalyzes the decarboxylation of four acetate groups of uroporphyrinogen-III to yield coproporphyrinogen-III. In Pseudoalteromonas translucida (strain TAC 125), this protein is Uroporphyrinogen decarboxylase.